A 230-amino-acid chain; its full sequence is Demethylmenaquinone methyltransferase (230 aa).

S-adenosyl-L-methionine contacts are provided by residues Thr62, Asp80, Asp100–Gly101, and Ser117.

The protein belongs to the class I-like SAM-binding methyltransferase superfamily. MenG/UbiE family.

The catalysed reaction is a 2-demethylmenaquinol + S-adenosyl-L-methionine = a menaquinol + S-adenosyl-L-homocysteine + H(+). Its pathway is quinol/quinone metabolism; menaquinone biosynthesis; menaquinol from 1,4-dihydroxy-2-naphthoate: step 2/2. In terms of biological role, methyltransferase required for the conversion of demethylmenaquinol (DMKH2) to menaquinol (MKH2). The polypeptide is Demethylmenaquinone methyltransferase (Corynebacterium urealyticum (strain ATCC 43042 / DSM 7109)).